The sequence spans 310 residues: Junctional adhesion molecule C (310 aa).

The first 29 residues, 1–29 (MALSRRLRLRLYARLPDFFLLLLFRGCMI), serve as a signal peptide directing secretion. At 30–241 (EAVNLKSSNR…GQDMEVYDLN (212 aa)) the chain is on the extracellular side. In terms of domain architecture, Ig-like V-type spans 35 to 127 (KSSNRNPVVH…VALNDRKEVD (93 aa)). 2 disulfides stabilise this stretch: C53–C115 and C160–C219. N104 and N192 each carry an N-linked (GlcNAc...) asparagine glycan. An Ig-like C2-type domain is found at 139–236 (PVTPVCRIPA…AARCEGQDME (98 aa)). The chain crosses the membrane as a helical span at residues 242 to 262 (IAGIIGGVLVVLIVLAVITMG). Residues 263–310 (ICCAYRRGCFISSKQDGESYKSPGKHDGVNYIRTSEEGDFRHKSSFVI) are Cytoplasmic-facing. 2 S-palmitoyl cysteine lipidation sites follow: C264 and C265.

It belongs to the immunoglobulin superfamily. As to quaternary structure, interacts with ITGAM. Interacts with GORASP2. Proteolytically cleaved from endothelial cells surface into a soluble form by ADAM10 and ADAM17; the release of soluble JAM3 is increased by pro-inflammatory factors. In terms of processing, N-glycosylated. Post-translationally, S-palmitoylated by ZDHHC7. S-palmitoylation promotes expression at tight junctions. Colocalizes with Jam2 near the lumen of seminiferous tubulues. Detected at junctional plaques that correspond to cell-cell contacts between spermatids and Sertoli cells. Detected on endothelial cells, in brain vessels and kidney glomeruli (at protein level). Detected in heart, lung, liver, kidney, testis, thymus, lymph node and Peyer patch. Endothelial cells.

The protein resides in the cell membrane. It localises to the cell junction. Its subcellular location is the desmosome. It is found in the tight junction. The protein localises to the secreted. Functionally, junctional adhesion protein that mediates heterotypic cell-cell interactions with its cognate receptor JAM2 to regulate different cellular processes. Plays a role in homing and mobilization of hematopoietic stem and progenitor cells within the bone marrow. At the surface of bone marrow stromal cells, it contributes to the retention of the hematopoietic stem and progenitor cells expressing JAM3. Plays a central role in leukocytes extravasation by facilitating transmigration through the endothelium. Plays a role in spermatogenesis where JAM2 and JAM3, which are respectively expressed by Sertoli and germ cells, mediate an interaction between both cell types and play an essential role in the anchorage of germ cells onto Sertoli cells and the assembly of cell polarity complexes during spermatid differentiation. Also functions as a counter-receptor for ITGAM, mediating leukocyte-platelet interactions and is involved in the regulation of transepithelial migration of polymorphonuclear neutrophils (PMN). Plays a role in angiogenesis. Plays a role in the regulation of cell migration. During myogenesis, it is involved in myocyte fusion. Its function is as follows. Promotes chemotaxis of vascular endothelial cells and stimulates angiogenesis. This Mus musculus (Mouse) protein is Junctional adhesion molecule C (Jam3).